Here is a 268-residue protein sequence, read N- to C-terminus: Nickel import ATP-binding protein NikE (268 aa).

Residues 4-252 enclose the ABC transporter domain; the sequence is LNISGLSHHY…SSDAGRVLQN (249 aa). 45–52 lines the ATP pocket; the sequence is GRSGCGKS.

This sequence belongs to the ABC transporter superfamily. Nickel importer (TC 3.A.1.5.3) family. As to quaternary structure, the complex is composed of two ATP-binding proteins (NikD and NikE), two transmembrane proteins (NikB and NikC) and a solute-binding protein (NikA).

Its subcellular location is the cell inner membrane. The catalysed reaction is Ni(2+)(out) + ATP + H2O = Ni(2+)(in) + ADP + phosphate + H(+). Its function is as follows. Part of the ABC transporter complex NikABCDE involved in nickel import. Responsible for energy coupling to the transport system. The sequence is that of Nickel import ATP-binding protein NikE from Escherichia coli (strain K12).